Here is a 380-residue protein sequence, read N- to C-terminus: Erythronate-4-phosphate dehydrogenase (380 aa).

Residues serine 45 and threonine 66 each contribute to the substrate site. Residues 126 to 127, aspartate 146, threonine 174, 205 to 207, and aspartate 231 each bind NAD(+); these read QV and ASR. The active site involves arginine 207. Glutamate 236 is an active-site residue. Catalysis depends on histidine 253, which acts as the Proton donor. Glycine 256 is a binding site for NAD(+). Residue tyrosine 257 participates in substrate binding.

This sequence belongs to the D-isomer specific 2-hydroxyacid dehydrogenase family. PdxB subfamily. Homodimer.

It is found in the cytoplasm. The catalysed reaction is 4-phospho-D-erythronate + NAD(+) = (R)-3-hydroxy-2-oxo-4-phosphooxybutanoate + NADH + H(+). The protein operates within cofactor biosynthesis; pyridoxine 5'-phosphate biosynthesis; pyridoxine 5'-phosphate from D-erythrose 4-phosphate: step 2/5. Its function is as follows. Catalyzes the oxidation of erythronate-4-phosphate to 3-hydroxy-2-oxo-4-phosphonooxybutanoate. This Pseudomonas savastanoi pv. phaseolicola (strain 1448A / Race 6) (Pseudomonas syringae pv. phaseolicola (strain 1448A / Race 6)) protein is Erythronate-4-phosphate dehydrogenase.